Reading from the N-terminus, the 168-residue chain is Prolyl-tRNA synthetase associated domain-containing protein 1 (168 aa).

Belongs to the PRORSD1 family.

The sequence is that of Prolyl-tRNA synthetase associated domain-containing protein 1 (prorsd1p) from Xenopus laevis (African clawed frog).